The sequence spans 549 residues: Protein X92 (549 aa).

The protein is Protein X92 of Trypanosoma brucei brucei.